Consider the following 522-residue polypeptide: Glucans biosynthesis protein G (522 aa).

The N-terminal stretch at 1–33 is a signal peptide; that stretch reads MPNNKFFVKSSKASLRWLGATVLLTLYALPSWA.

Belongs to the OpgD/OpgG family.

It is found in the periplasm. The protein operates within glycan metabolism; osmoregulated periplasmic glucan (OPG) biosynthesis. In terms of biological role, involved in the biosynthesis of osmoregulated periplasmic glucans (OPGs). This is Glucans biosynthesis protein G from Sodalis glossinidius (strain morsitans).